We begin with the raw amino-acid sequence, 274 residues long: 2,3,4,5-tetrahydropyridine-2,6-dicarboxylate N-succinyltransferase (274 aa).

Positions 106 and 143 each coordinate substrate.

Belongs to the transferase hexapeptide repeat family. In terms of assembly, homotrimer.

It localises to the cytoplasm. The enzyme catalyses (S)-2,3,4,5-tetrahydrodipicolinate + succinyl-CoA + H2O = (S)-2-succinylamino-6-oxoheptanedioate + CoA. It participates in amino-acid biosynthesis; L-lysine biosynthesis via DAP pathway; LL-2,6-diaminopimelate from (S)-tetrahydrodipicolinate (succinylase route): step 1/3. This chain is 2,3,4,5-tetrahydropyridine-2,6-dicarboxylate N-succinyltransferase, found in Albidiferax ferrireducens (strain ATCC BAA-621 / DSM 15236 / T118) (Rhodoferax ferrireducens).